The following is a 549-amino-acid chain: E-selectin (549 aa).

The N-terminal stretch at 1-21 is a signal peptide; sequence MNASCFLSALTFVLLIGKSIA. A C-type lectin domain is found at 22 to 139; the sequence is WYYNASSELM…CDKKKLALCY (118 aa). At 22–494 the chain is on the extracellular side; that stretch reads WYYNASSELM…CEAPANPPRP (473 aa). N-linked (GlcNAc...) asparagine glycosylation is found at Asn-25 and Asn-60. Intrachain disulfides connect Cys-40–Cys-138, Cys-111–Cys-130, Cys-143–Cys-154, Cys-148–Cys-163, Cys-165–Cys-174, Cys-180–Cys-225, Cys-193–Cys-206, Cys-210–Cys-238, Cys-243–Cys-287, Cys-256–Cys-269, Cys-273–Cys-300, Cys-305–Cys-350, Cys-336–Cys-363, Cys-368–Cys-413, Cys-399–Cys-426, Cys-431–Cys-472, and Cys-458–Cys-485. The Ca(2+) site is built by Glu-101, Asn-103, and Glu-109. Residues 101-109, 113-118, and 126-128 each bind a carbohydrate; these read EPNNKQRNE, EIYIQR, and NDE. Ca(2+) contacts are provided by Asn-126 and Asp-127. The region spanning 140-175 is the EGF-like domain; that stretch reads TASCTNTSCSGHGECVETINSYTCKCHPGFLGPKCD. Asn-145 carries an N-linked (GlcNAc...) asparagine glycan. 5 consecutive Sushi domains span residues 178 to 240, 241 to 302, 303 to 365, 366 to 428, and 429 to 487; these read VTCQ…ACHV, VECK…SCKA, VTCD…VCKA, SQCE…TCAG, and VQCS…TCEA. N-linked (GlcNAc...) asparagine glycans are attached at residues Asn-192 and Asn-203. N-linked (GlcNAc...) asparagine glycosylation occurs at Asn-266. Asn-313, Asn-320, and Asn-333 each carry an N-linked (GlcNAc...) asparagine glycan. Asn-441 and Asn-465 each carry an N-linked (GlcNAc...) asparagine glycan. A helical transmembrane segment spans residues 495-516; sequence LVVALSVAATSLLTLSSLIYVL. Residues 517–549 lie on the Cytoplasmic side of the membrane; it reads KRFFWKKAKKFVPASSCQSLQSFENYQGPSYII.

This sequence belongs to the selectin/LECAM family. Interacts with SELPLG/PSGL1 and PODXL2 through the sialyl Lewis X epitope. SELPLG sulfation appears not to be required for this interaction.

Its subcellular location is the cell membrane. Its function is as follows. Cell-surface glycoprotein having a role in immunoadhesion. Mediates in the adhesion of blood neutrophils in cytokine-activated endothelium through interaction with SELPLG/PSGL1. May have a role in capillary morphogenesis. This is E-selectin (Sele) from Rattus norvegicus (Rat).